We begin with the raw amino-acid sequence, 161 residues long: Protein-lysine N-methyltransferase (161 aa).

Positions 34 to 40 (DLGCGDG) match the DxGxGxG SAM-binding motif motif.

Belongs to the class I-like SAM-binding methyltransferase superfamily. In terms of assembly, monomer.

The catalysed reaction is L-lysyl-[protein] + S-adenosyl-L-methionine = N(6)-methyl-L-lysyl-[protein] + S-adenosyl-L-homocysteine + H(+). Its function is as follows. Catalyzes the methylation of lysine residues in target proteins, using S-adenosyl-L-methionine (SAM) as the methyl donor. Exhibits broad substrate specificity, being able to methylate the crenarchaeal chromatin protein Cren7 primarily at 'Lys-11', 'Lys-16' and 'Lys-31', as well as a number of recombinant Sulfolobus proteins in vitro. Methylates lysine residues in a rather sequence-independent manner. The polypeptide is Protein-lysine N-methyltransferase (Saccharolobus islandicus (strain REY15A) (Sulfolobus islandicus)).